The chain runs to 282 residues: 2-dehydro-3-deoxyphosphooctonate aldolase (282 aa).

This sequence belongs to the KdsA family.

The protein localises to the cytoplasm. It carries out the reaction D-arabinose 5-phosphate + phosphoenolpyruvate + H2O = 3-deoxy-alpha-D-manno-2-octulosonate-8-phosphate + phosphate. It functions in the pathway carbohydrate biosynthesis; 3-deoxy-D-manno-octulosonate biosynthesis; 3-deoxy-D-manno-octulosonate from D-ribulose 5-phosphate: step 2/3. The protein operates within bacterial outer membrane biogenesis; lipopolysaccharide biosynthesis. The protein is 2-dehydro-3-deoxyphosphooctonate aldolase of Agrobacterium fabrum (strain C58 / ATCC 33970) (Agrobacterium tumefaciens (strain C58)).